Consider the following 118-residue polypeptide: GRB2-related adapter protein-like (118 aa).

Residues 1-58 enclose the SH3 domain; the sequence is MESVALYSFQATESDELAFNKGDTLKILNMEDDQNWYKAELRGVEGFIPKNYIRVKPH. The 59-residue stretch at 60 to 118 folds into the SH2 domain; the sequence is WYSGRISRQLAEEILMKRNHLGAFLIRESESSPGEFSVSVNNRAQRGPCLGPKSHSRLG. A disordered region spans residues 89–118; that stretch reads ESSPGEFSVSVNNRAQRGPCLGPKSHSRLG. Polar residues predominate over residues 90–103; the sequence is SSPGEFSVSVNNRA.

Belongs to the GRB2/sem-5/DRK family.

The sequence is that of GRB2-related adapter protein-like (GRAPL) from Homo sapiens (Human).